We begin with the raw amino-acid sequence, 659 residues long: Threonine--tRNA ligase (659 aa).

The 64-residue stretch at 7 to 70 folds into the TGS domain; it reads VQATVTVTFP…TDDATVEIIT (64 aa). Residues 255–557 are catalytic; the sequence is DHRKLGAELE…LIEHTAGNFP (303 aa). Zn(2+) contacts are provided by C353, H404, and H534.

The protein belongs to the class-II aminoacyl-tRNA synthetase family. Homodimer. The cofactor is Zn(2+).

It localises to the cytoplasm. It carries out the reaction tRNA(Thr) + L-threonine + ATP = L-threonyl-tRNA(Thr) + AMP + diphosphate + H(+). Catalyzes the attachment of threonine to tRNA(Thr) in a two-step reaction: L-threonine is first activated by ATP to form Thr-AMP and then transferred to the acceptor end of tRNA(Thr). Also edits incorrectly charged L-seryl-tRNA(Thr). The chain is Threonine--tRNA ligase from Chlorobium phaeobacteroides (strain BS1).